The chain runs to 419 residues: 3-isopropylmalate dehydratase large subunit (419 aa).

3 residues coordinate [4Fe-4S] cluster: cysteine 300, cysteine 360, and cysteine 363.

It belongs to the aconitase/IPM isomerase family. LeuC type 2 subfamily. Heterodimer of LeuC and LeuD. [4Fe-4S] cluster is required as a cofactor.

It carries out the reaction (2R,3S)-3-isopropylmalate = (2S)-2-isopropylmalate. The protein operates within amino-acid biosynthesis; L-leucine biosynthesis; L-leucine from 3-methyl-2-oxobutanoate: step 2/4. Its function is as follows. Catalyzes the isomerization between 2-isopropylmalate and 3-isopropylmalate, via the formation of 2-isopropylmaleate. The sequence is that of 3-isopropylmalate dehydratase large subunit from Nitratidesulfovibrio vulgaris (strain DP4) (Desulfovibrio vulgaris).